A 229-amino-acid polypeptide reads, in one-letter code: Peptidase E (229 aa).

Active-site charge relay system residues include Ser120, Asp135, and His157.

The protein belongs to the peptidase S51 family.

The protein resides in the cytoplasm. It catalyses the reaction Dipeptidase E catalyzes the hydrolysis of dipeptides Asp-|-Xaa. It does not act on peptides with N-terminal Glu, Asn or Gln, nor does it cleave isoaspartyl peptides.. Functionally, hydrolyzes dipeptides containing N-terminal aspartate residues. May play a role in allowing the cell to use peptide aspartate to spare carbon otherwise required for the synthesis of the aspartate family of amino acids. The sequence is that of Peptidase E from Shigella boydii serotype 18 (strain CDC 3083-94 / BS512).